The following is a 277-amino-acid chain: Inositol monophosphatase 1 (277 aa).

4 residues coordinate Mg(2+): glutamate 70, aspartate 90, isoleucine 92, and aspartate 93. Substrate-binding positions include glutamate 70, 90–95 (DPIDGT), 194–196 (GTA), glutamate 213, and aspartate 220. Aspartate 220 provides a ligand contact to Mg(2+).

This sequence belongs to the inositol monophosphatase superfamily. As to quaternary structure, homodimer. Requires Mg(2+) as cofactor. Mostly expressed in brain, small intestine, testis, kidney, and spleen (at protein level).

It localises to the cytoplasm. It catalyses the reaction a myo-inositol phosphate + H2O = myo-inositol + phosphate. The enzyme catalyses 1D-myo-inositol 1-phosphate + H2O = myo-inositol + phosphate. The catalysed reaction is 1D-myo-inositol 2-phosphate + H2O = myo-inositol + phosphate. It carries out the reaction 1D-myo-inositol 3-phosphate + H2O = myo-inositol + phosphate. It catalyses the reaction 1D-myo-inositol 4-phosphate + H2O = myo-inositol + phosphate. The enzyme catalyses 1D-myo-inositol 5-phosphate + H2O = myo-inositol + phosphate. The catalysed reaction is 1D-myo-inositol 6-phosphate + H2O = myo-inositol + phosphate. It carries out the reaction scyllo-inositol 1-phosphate + H2O = scyllo-inositol + phosphate. It catalyses the reaction alpha-D-galactose 1-phosphate + H2O = D-galactose + phosphate. The enzyme catalyses alpha-D-glucose 1-phosphate + H2O = D-glucose + phosphate. The catalysed reaction is D-glucose 6-phosphate + H2O = D-glucose + phosphate. It carries out the reaction beta-D-fructose 1-phosphate + H2O = D-fructose + phosphate. It catalyses the reaction glycerol 2-phosphate + H2O = glycerol + phosphate. The enzyme catalyses adenosine 2'-phosphate + H2O = adenosine + phosphate. It participates in polyol metabolism; myo-inositol biosynthesis; myo-inositol from D-glucose 6-phosphate: step 2/2. With respect to regulation, inhibited by Li(+), Ca(2+) and Mn(2+), but also by Mg(2+) at concentrations above 3 mM. Phosphatase involved in the dephosphorylation of myo-inositol monophosphate to generate myo-inositol. Is also able to dephosphorylate scyllo-inositol-phosphate, myo-inositol 1,4-diphosphate, scyllo-inositol-1,3-diphosphate and scyllo-inositol-1,4-diphosphate. Also dephosphorylates in vitro other sugar-phosphates including D-galactose-1-phosphate, glucose-1-phosphate, glucose-6-phosphate, fructose-1-phosphate, beta-glycerophosphate and 2'-AMP. Responsible for the provision of inositol required for synthesis of phosphatidylinositol and polyphosphoinositides, and involved in maintaining normal brain function. Has been implicated as the pharmacological target for lithium Li(+) action in brain. The sequence is that of Inositol monophosphatase 1 (Impa1) from Mus musculus (Mouse).